We begin with the raw amino-acid sequence, 214 residues long: Isochorismatase family protein 2B (214 aa).

Belongs to the isochorismatase family.

The sequence is that of Isochorismatase family protein 2B from Dictyostelium discoideum (Social amoeba).